Reading from the N-terminus, the 446-residue chain is Methylenetetrahydrofolate--tRNA-(uracil-5-)-methyltransferase TrmFO (446 aa).

11-16 lines the FAD pocket; sequence GGGLAG.

The protein belongs to the MnmG family. TrmFO subfamily. FAD is required as a cofactor.

The protein localises to the cytoplasm. The catalysed reaction is uridine(54) in tRNA + (6R)-5,10-methylene-5,6,7,8-tetrahydrofolate + NADH + H(+) = 5-methyluridine(54) in tRNA + (6S)-5,6,7,8-tetrahydrofolate + NAD(+). It carries out the reaction uridine(54) in tRNA + (6R)-5,10-methylene-5,6,7,8-tetrahydrofolate + NADPH + H(+) = 5-methyluridine(54) in tRNA + (6S)-5,6,7,8-tetrahydrofolate + NADP(+). Catalyzes the folate-dependent formation of 5-methyl-uridine at position 54 (M-5-U54) in all tRNAs. The protein is Methylenetetrahydrofolate--tRNA-(uracil-5-)-methyltransferase TrmFO of Oleidesulfovibrio alaskensis (strain ATCC BAA-1058 / DSM 17464 / G20) (Desulfovibrio alaskensis).